The following is a 264-amino-acid chain: Indole-3-glycerol phosphate synthase (264 aa).

It belongs to the TrpC family.

The catalysed reaction is 1-(2-carboxyphenylamino)-1-deoxy-D-ribulose 5-phosphate + H(+) = (1S,2R)-1-C-(indol-3-yl)glycerol 3-phosphate + CO2 + H2O. It participates in amino-acid biosynthesis; L-tryptophan biosynthesis; L-tryptophan from chorismate: step 4/5. The polypeptide is Indole-3-glycerol phosphate synthase (Albidiferax ferrireducens (strain ATCC BAA-621 / DSM 15236 / T118) (Rhodoferax ferrireducens)).